Consider the following 266-residue polypeptide: Ribonuclease HII (266 aa).

Residues 73–266 form the RNase H type-2 domain; sequence SPVAGVDEAG…NCGSRQKCEG (194 aa). Asp79, Glu80, and Asp173 together coordinate a divalent metal cation.

Belongs to the RNase HII family. Mn(2+) is required as a cofactor. It depends on Mg(2+) as a cofactor.

It localises to the cytoplasm. The catalysed reaction is Endonucleolytic cleavage to 5'-phosphomonoester.. Its function is as follows. Endonuclease that specifically degrades the RNA of RNA-DNA hybrids. This chain is Ribonuclease HII, found in Pelotomaculum thermopropionicum (strain DSM 13744 / JCM 10971 / SI).